A 429-amino-acid chain; its full sequence is uncharacterized protein (429 aa).

11 helical membrane passes run 27-47 (PFFFLFCLFIPFDNTSLQSIG), 48-68 (GIMTASPSALILLPGLFVSIL), 78-98 (ILLCFFGVLLISFLYYFYWVF), 106-126 (IFILDRGSRYFLLYVFYFLAL), 142-162 (ALIIIVVIFSVLLNYLDPAII), 198-218 (LLLAVLLNWSTFFLVTVTIVI), 219-239 (AILTTSKGAALSFLICICFYF), 249-269 (VLLSLCSIVISYIIFKYYFLD), 288-308 (FIVGLKIFLFNPLGVGFFGYL), 351-371 (LILDLLIIYGVFFLIPFIYFI), and 399-419 (FFISHLGSYFTPFCIAFLIIL).

The protein resides in the cell membrane. May function as a transporter. This is an uncharacterized protein from Klebsiella pneumoniae.